The sequence spans 232 residues: Noggin (232 aa).

The first 27 residues, 1–27 (MERCPSLGVTLYALVVVLGLRATPAGG), serve as a signal peptide directing secretion. Asn62 is a glycosylation site (N-linked (GlcNAc...) asparagine). Residues 77–96 (GFMATSPPEDRPGGGGGAAG) form a disordered region. Cystine bridges form between Cys155–Cys192, Cys178–Cys228, Cys184–Cys230, and Cys207–Cys215.

This sequence belongs to the noggin family. In terms of assembly, homodimer. Interacts with GDF5; inhibits chondrocyte differentiation.

Its subcellular location is the secreted. Its function is as follows. Inhibitor of bone morphogenetic proteins (BMP) signaling which is required for growth and patterning of the neural tube and somite. Essential for cartilage morphogenesis and joint formation. Inhibits chondrocyte differentiation through its interaction with GDF5 and, probably, GDF6. The protein is Noggin (NOG) of Homo sapiens (Human).